The sequence spans 126 residues: Profilin-2 (126 aa).

Ser-2 bears the Blocked amino end (Ser) mark. Lys-104 bears the N6,N6,N6-trimethyllysine mark.

Belongs to the profilin family. In terms of assembly, occurs in many kinds of cells as a complex with monomeric actin in a 1:1 ratio.

The protein localises to the cytoplasm. The protein resides in the cytoskeleton. In terms of biological role, binds to actin and affects the structure of the cytoskeleton. At high concentrations, profilin prevents the polymerization of actin, whereas it enhances it at low concentrations. By binding to PIP2, it inhibits the formation of IP3 and DG. This is Profilin-2 from Acanthamoeba castellanii (Amoeba).